The primary structure comprises 576 residues: Ferroportin (576 aa).

Topologically, residues 1–23 are cytoplasmic; the sequence is MPKAGEQARQGGCCGSLANYLTS. The chain crosses the membrane as a helical span at residues 24-53; the sequence is AKFLLYLGHSLSTWGDRMWHFAVSVFLVEL. Residues Asp39 and His43 each contribute to the Fe cation site. Residues 54–57 are Extracellular-facing; it reads YGNS. A helical transmembrane segment spans residues 58–84; the sequence is LLLTAVYGLVVAGSVLVLGAIIGDWVD. Residues 85-87 lie on the Cytoplasmic side of the membrane; sequence KNA. Residues 88-118 traverse the membrane as a helical segment; sequence RLKVAQTSLVVQNVSVILCGIILMMVFLHKN. Over 119 to 126 the chain is Extracellular; that stretch reads ELLTMYHG. The chain crosses the membrane as a helical span at residues 127–162; that stretch reads WVLTFCYILIITIADVANLASTATAITIQRDWIVVV. Over 163 to 164 the chain is Cytoplasmic; that stretch reads AG. A helical transmembrane segment spans residues 165 to 195; that stretch reads GDRSKLADMNATIRRIDQLTNILAPMAVGQI. The Extracellular segment spans residues 196–202; the sequence is MTFGSAV. A helical membrane pass occupies residues 203–229; sequence IGCGFISGWNLVSMCVEYFLLWKVYQK. Residues 230-306 are Cytoplasmic-facing; it reads TPALAVKAAL…DGWVSYYNQS (77 aa). A helical membrane pass occupies residues 307–333; sequence VFLAGMGLAFLYMTVLGFDCITTGYAY. Cys326 is a Fe cation binding site. Over 334–338 the chain is Extracellular; it reads TQGLS. The helical transmembrane segment at 339–366 threads the bilayer; sequence GSILSILMGASAITGIMGTVAFTWLRRK. Residues 367–368 are Cytoplasmic-facing; the sequence is CG. The chain crosses the membrane as a helical span at residues 369 to 391; sequence LVRTGLISGFAQLSCLILCVISV. The Extracellular portion of the chain corresponds to 392-458; sequence FMPGSPLDLS…ETTPKSVPII (67 aa). N-linked (GlcNAc...) asparagine glycosylation is present at Asn439. A helical transmembrane segment spans residues 459-488; sequence SVSLLFAGVIAARIGLWSFDLTVTQLLQEN. Residues 489-493 are Cytoplasmic-facing; that stretch reads VIESE. The helical transmembrane segment at 494 to 518 threads the bilayer; it reads RGIINGVQNSMNYLLDLLHFIMVIL. Fe cation is bound at residue His512. The Extracellular segment spans residues 519–521; that stretch reads APN. A helical membrane pass occupies residues 522-547; that stretch reads PEAFGLLVLISVSFVAMGHIMYFRFA. Topologically, residues 548–576 are cytoplasmic; sequence QKTLGSKLFACGADDEEVTNENQANTSVV.

The protein belongs to the ferroportin (FP) (TC 2.A.100) family. SLC40A subfamily. In terms of assembly, identified in a complex with STOM. Interacts with HAMP; affinity of the peptide hormone HAMP for SLC40A1 increases by 80-fold in the presence of iron and the interaction promotes SLC40A1 ubiquitination and degradation. Part of a complex composed of SLC40A1/ferroportin, TF/transferrin and HEPH/hephaestin that transfers iron from cells to transferrin. In terms of processing, polyubiquitinated by RNF217; leading to proteasomal degradation. Under conditions of high systemic iron levels, both the hormone peptide hepcidin/HAMP and holo(iron bound)-transferrin/TF induce the ubiquitination, internalization and proteasomal degradation of SLC40A1 to control iron release from cells.

It is found in the cell membrane. The protein resides in the basolateral cell membrane. The enzyme catalyses Fe(2+)(in) = Fe(2+)(out). During elevated serum iron levels, liver-derived hepcidin/HAMP negatively regulates cell surface ferroportin/SLC40A1 by inducing its ubiquitination, internalization, and degradation. Indeed, hepcidin/HAMP affinity towards ferroportin/SLC40A1 increases by 80-fold in the presence of iron. In terms of biological role, transports Fe(2+) from the inside of a cell to the outside of the cell, playing a key role for maintaining systemic iron homeostasis. Transports iron from intestinal, splenic, hepatic cells, macrophages and erythrocytes into the blood to provide iron to other tissues. Controls therefore dietary iron uptake, iron recycling by macrophages and erythrocytes, and release of iron stores in hepatocytes. When iron is in excess in serum, circulating HAMP/hepcidin levels increase resulting in a degradation of SLC40A1, thus limiting the iron efflux to plasma. The polypeptide is Ferroportin (Canis lupus familiaris (Dog)).